The primary structure comprises 268 residues: Taurine import ATP-binding protein TauB (268 aa).

The ABC transporter domain occupies 4-236 (LSIENISMRF…MGVNADLREV (233 aa)). 41-48 (GPSGCGKT) serves as a coordination point for ATP.

It belongs to the ABC transporter superfamily. Taurine importer (TC 3.A.1.17.1) family. As to quaternary structure, the complex is composed of two ATP-binding proteins (TauB), two transmembrane proteins (TauC) and a solute-binding protein (TauA).

It is found in the cell inner membrane. The enzyme catalyses taurine(out) + ATP + H2O = taurine(in) + ADP + phosphate + H(+). Its function is as follows. Part of the ABC transporter complex TauABC involved in taurine import. Responsible for energy coupling to the transport system. In Ruegeria pomeroyi (strain ATCC 700808 / DSM 15171 / DSS-3) (Silicibacter pomeroyi), this protein is Taurine import ATP-binding protein TauB.